A 732-amino-acid chain; its full sequence is Formin-homology and zinc finger domains protein 1 (732 aa).

4 stretches are compositionally biased toward low complexity: residues 1–12, 19–45, 121–137, and 240–251; these read MMLASSAPTAPS, QPSA…SDAS, QQQQ…QSSS, and SSPKSPTSPTQP. Residues 1-27 form the signal peptide; the sequence is MMLASSAPTAPSLLPPSSQPSAATTRA. Disordered regions lie at residues 1 to 45, 121 to 141, and 232 to 267; these read MMLA…SDAS, QQQQ…SDRK, and RGRP…RRNT. Over residues 256-267 the composition is skewed to polar residues; sequence SQASSLPSRRNT. In terms of domain architecture, FH2 spans 355-732; sequence PISLSSSIIP…DDHHINVSSP (378 aa).

The protein belongs to the formin homology family. In terms of tissue distribution, transiently expressed in all mesoderm derived progenitor body wall muscle cells before they differentiate.

In terms of biological role, acts redundantly with hlh-1 to promote body wall muscle cell and coelomocyte specification in postembryonic mesoderm progenitors, probably through suppression of sem-2. This chain is Formin-homology and zinc finger domains protein 1, found in Caenorhabditis elegans.